The chain runs to 247 residues: ATP synthase subunit a, chloroplastic (247 aa).

5 helical membrane passes run 38-58 (QVLI…TIAV), 95-115 (VPFI…GALL), 134-154 (INTT…AGLT), 199-219 (LVVV…VMFL), and 220-240 (GLFT…AYIG).

This sequence belongs to the ATPase A chain family. As to quaternary structure, F-type ATPases have 2 components, CF(1) - the catalytic core - and CF(0) - the membrane proton channel. CF(1) has five subunits: alpha(3), beta(3), gamma(1), delta(1), epsilon(1). CF(0) has four main subunits: a, b, b' and c.

It is found in the plastid. Its subcellular location is the chloroplast thylakoid membrane. In terms of biological role, key component of the proton channel; it plays a direct role in the translocation of protons across the membrane. The protein is ATP synthase subunit a, chloroplastic of Buxus microphylla (Littleleaf boxwood).